An 86-amino-acid chain; its full sequence is MSTMNTLAFCYGLPNINDITQGIIFVRNNIFYSYLTDYAMEACILNYINIRADKIEDLKKSLVGKTISVRVIRVDVLKGYIDVSIV.

One can recognise an S1 motif domain in the interval 15 to 86 (NINDITQGII…LKGYIDVSIV (72 aa)).

The protein belongs to the poxviridae K3 protein family. In terms of assembly, interacts with host PKR kinase.

Its function is as follows. Viral mimic of eIF-2-alpha that acts as a pseudosubstrate for EIF2AK2/PKR kinase. Inhibits therefore eIF-2-alpha phosphorylation by host EIF2AK2/PKR kinase and prevents protein synthesis shutoff. The polypeptide is Protein K3 homolog (Sus scrofa (Pig)).